The following is a 176-amino-acid chain: Large ribosomal subunit protein eL20 (176 aa).

The protein belongs to the eukaryotic ribosomal protein eL20 family. Component of the large ribosomal subunit.

Its subcellular location is the cytoplasm. In terms of biological role, component of the large ribosomal subunit. The ribosome is a large ribonucleoprotein complex responsible for the synthesis of proteins in the cell. The polypeptide is Large ribosomal subunit protein eL20 (rpl18a) (Salmo salar (Atlantic salmon)).